Consider the following 368-residue polypeptide: UDP-galactose/UDP-N-acetylglucosamine transporter srf-3 (368 aa).

The next 8 membrane-spanning stretches (helical) occupy residues 72–92, 118–138, 145–165, 174–194, 203–223, 235–254, 273–293, and 317–337; these read FVSTVAVWLTEVIKCFICLFL, LKVCIPAMIYIVQNNLFYVAA, TFMITSQLKIFTAAIFTVIIL, WFALAVLFVGVSLVQLQGTKA, FVGFVAVVVACCLSGFAGIYF, LWMRNVQMAVFSIPASFSAI, SIVWLTVLWYGVGGLSVAVCI, and IFLFDFIPSFTFLLGASLVIF.

The protein belongs to the nucleotide-sugar transporter family. SLC35A subfamily. As to expression, expressed exclusively in pharyngeal cells g1 and g2, lateral seam cells, spermatheca and vas deferens.

The protein resides in the golgi apparatus membrane. Acts as a transporter of both UDP-galactose and UDP-N-acetylglucosamine into the Golgi lumen. Apparently transports UDP-galactose and UDP-N-acetylglucosamine simultaneously, and independently, by an unknown mechanism. Functions redundantly with nucleotide sugar transporter nstp-4. May be involved in gonadal development. This chain is UDP-galactose/UDP-N-acetylglucosamine transporter srf-3 (srf-3), found in Caenorhabditis elegans.